A 447-amino-acid chain; its full sequence is Phosphatidylinositol 4-kinase type 2-alpha (447 aa).

The tract at residues 1 to 77 (MDETSPLVSP…HRNEFPEDPE (77 aa)) is disordered. Residues 48 to 77 (RSRERQPLLDRDRGASPRDPHRNEFPEDPE) are compositionally biased toward basic and acidic residues. The region spanning 92-421 (GIYPERIYQG…VQMPPVIVET (330 aa)) is the PI3K/PI4K catalytic domain. The interval 98–104 (IYQGSSG) is G-loop. Residues 99-105 (YQGSSGS) and lysine 120 contribute to the ATP site. Residues 125-127 (EPY) are important for substrate binding. The segment at 133-146 (KWTKWLQKLCCPCC) is important for interaction with membranes. Residues cysteine 142, cysteine 143, cysteine 145, and cysteine 146 are each lipidated (S-palmitoyl cysteine). 229 to 232 (QIFV) provides a ligand contact to ATP. The important for interaction with membranes stretch occupies residues 236 to 244 (KDADFWLRR). The interval 273-281 (RNTDRGNDN) is catalytic loop. Residues 312–332 (AIDNGLAFPLKHPDSWRAYPF) are activation loop. Residue aspartate 314 participates in ATP binding. The tract at residues 327-336 (WRAYPFYWAW) is important for interaction with membranes.

Belongs to the PI3/PI4-kinase family. Type II PI4K subfamily.

Its subcellular location is the golgi apparatus. The protein localises to the trans-Golgi network membrane. It localises to the membrane raft. The protein resides in the endosome. It is found in the cytoplasmic vesicle. Its subcellular location is the cell projection. The protein localises to the dendrite. It localises to the presynaptic cell membrane. The protein resides in the synapse. It is found in the synaptosome. Its subcellular location is the mitochondrion. The protein localises to the membrane. It localises to the cell membrane. The protein resides in the perikaryon. It is found in the neuron projection. The catalysed reaction is a 1,2-diacyl-sn-glycero-3-phospho-(1D-myo-inositol) + ATP = a 1,2-diacyl-sn-glycero-3-phospho-(1D-myo-inositol 4-phosphate) + ADP + H(+). Functionally, membrane-bound phosphatidylinositol-4 kinase (PI4-kinase) that catalyzes the phosphorylation of phosphatidylinositol (PI) to phosphatidylinositol 4-phosphate (PI4P), a lipid that plays important roles in endocytosis, Golgi function, protein sorting and membrane trafficking. Besides, phosphorylation of phosphatidylinositol (PI) to phosphatidylinositol 4-phosphate (PI4P) is the first committed step in the generation of phosphatidylinositol 4,5-bisphosphate (PIP2), a precursor of the second messenger inositol 1,4,5-trisphosphate (InsP3). The protein is Phosphatidylinositol 4-kinase type 2-alpha (pi4k2a) of Danio rerio (Zebrafish).